The primary structure comprises 120 residues: uncharacterized protein (120 aa).

This is an uncharacterized protein from Acanthamoeba polyphaga mimivirus (APMV).